Here is a 647-residue protein sequence, read N- to C-terminus: Exoribonuclease 2 (647 aa).

An RNB domain is found at 192–519; it reads RIDLTSLDFV…NHRLLKAIIQ (328 aa). The 83-residue stretch at 564–646 folds into the S1 motif domain; sequence EQRFTAEIID…ETRNIVARPT (83 aa).

It belongs to the RNR ribonuclease family. RNase II subfamily.

Its subcellular location is the cytoplasm. The enzyme catalyses Exonucleolytic cleavage in the 3'- to 5'-direction to yield nucleoside 5'-phosphates.. Its function is as follows. Involved in mRNA degradation. Hydrolyzes single-stranded polyribonucleotides processively in the 3' to 5' direction. This Photorhabdus laumondii subsp. laumondii (strain DSM 15139 / CIP 105565 / TT01) (Photorhabdus luminescens subsp. laumondii) protein is Exoribonuclease 2.